The primary structure comprises 409 residues: uncharacterized protein (409 aa).

The next 12 helical transmembrane spans lie at 3–23, 43–63, 73–93, 95–115, 135–155, 162–182, 209–229, 248–268, 283–303, 309–329, 346–366, and 379–399; these read IIVK…PTTE, ITQI…LSLG, PIVL…IFSV, IEML…GSVI, ILSP…GYII, YVFV…YKIL, ILWL…GFFI, KLAF…GYLI, FIFS…LEFI, LAIS…SLLI, TAGS…TYCV, and LLCL…CILY.

Belongs to the major facilitator superfamily. Bcr/CmlA family.

Its subcellular location is the cell inner membrane. This is an uncharacterized protein from Rickettsia typhi (strain ATCC VR-144 / Wilmington).